We begin with the raw amino-acid sequence, 147 residues long: C-glycoside deglycosidase beta subunit (147 aa).

This sequence belongs to the C-glycoside deglycosidase beta subunit family. As to quaternary structure, heterooctamer composed of four alpha subunits (DfgA) and four beta subunits (DfgB). Requires Mn(2+) as cofactor.

The enzyme catalyses 3''-dehydroisoorientin = 1,5-anhydro-D-erythro-hex-1-en-3-ulose + luteolin. It carries out the reaction 3''-dehydroisovitexin = 1,5-anhydro-D-erythro-hex-1-en-3-ulose + apigenin. With respect to regulation, activity is strongly reduced in the presence of chelating agents. Functionally, carbon-carbon bond-cleaving enzyme which participates in the metabolism of C-glycosides. Acts on the C6-glycosylated compounds 3''-dehydroisoorientin (3''-oxo-homoorientin) and 3''-dehydroisovitexin (3''-oxo-isovitexin). This Eubacterium cellulosolvens (strain ATCC 43171 / JCM 9499 / 6) (Cillobacterium cellulosolvens) protein is C-glycoside deglycosidase beta subunit.